The primary structure comprises 706 residues: Elongation factor G (706 aa).

The tr-type G domain occupies 8 to 297 (ERVRNIGIAA…AVIDYLPAPT (290 aa)). Residues 17–24 (AHIDAGKT), 96–100 (DTPGH), and 150–153 (NKMD) each bind GTP.

It belongs to the TRAFAC class translation factor GTPase superfamily. Classic translation factor GTPase family. EF-G/EF-2 subfamily.

The protein resides in the cytoplasm. Catalyzes the GTP-dependent ribosomal translocation step during translation elongation. During this step, the ribosome changes from the pre-translocational (PRE) to the post-translocational (POST) state as the newly formed A-site-bound peptidyl-tRNA and P-site-bound deacylated tRNA move to the P and E sites, respectively. Catalyzes the coordinated movement of the two tRNA molecules, the mRNA and conformational changes in the ribosome. The chain is Elongation factor G from Cyanothece sp. (strain PCC 7425 / ATCC 29141).